Consider the following 170-residue polypeptide: Small ribosomal subunit protein mS25 (170 aa).

The protein belongs to the mitochondrion-specific ribosomal protein mS25 family. In terms of assembly, component of the mitochondrial ribosome small subunit (28S) which comprises a 12S rRNA and about 30 distinct proteins.

It is found in the mitochondrion. The protein is Small ribosomal subunit protein mS25 (mrps-25) of Caenorhabditis elegans.